Here is a 213-residue protein sequence, read N- to C-terminus: Dimethylamine corrinoid protein 1 (213 aa).

One can recognise a B12-binding N-terminal domain in the interval 1-90 (MSKEELLQEL…LMPEGSASSK (90 aa)). In terms of domain architecture, B12-binding spans 91 to 213 (MGVIVNGTVE…AVAKAKELLA (123 aa)). His-104 lines the methylcob(III)alamin pocket.

The protein belongs to the methylamine corrinoid protein family.

Its pathway is one-carbon metabolism; methanogenesis from dimethylamine. Acts as a methyl group carrier between MtbB and MtbA. In Methanosarcina acetivorans (strain ATCC 35395 / DSM 2834 / JCM 12185 / C2A), this protein is Dimethylamine corrinoid protein 1 (mtbC1).